The chain runs to 477 residues: UDP-N-acetylmuramate--L-alanine ligase (477 aa).

ATP is bound at residue 125 to 131 (GTHGKTT).

It belongs to the MurCDEF family.

It is found in the cytoplasm. It catalyses the reaction UDP-N-acetyl-alpha-D-muramate + L-alanine + ATP = UDP-N-acetyl-alpha-D-muramoyl-L-alanine + ADP + phosphate + H(+). Its pathway is cell wall biogenesis; peptidoglycan biosynthesis. In terms of biological role, cell wall formation. The sequence is that of UDP-N-acetylmuramate--L-alanine ligase from Acidothermus cellulolyticus (strain ATCC 43068 / DSM 8971 / 11B).